Here is a 426-residue protein sequence, read N- to C-terminus: Mothers against decapentaplegic homolog 7 (426 aa).

The interval 14 to 42 (WRSRAPGGEDEEEGVGGGGGGGELRGEGA) is disordered. N6-acetyllysine; alternate occurs at positions 64 and 70. Glycyl lysine isopeptide (Lys-Gly) (interchain with G-Cter in ubiquitin); alternate cross-links involve residues lysine 64 and lysine 70. The 144-residue stretch at 64 to 207 (KAVRGAKGHH…LSRLCELESP (144 aa)) folds into the MH1 domain. Over residues 67–76 (RGAKGHHHPH) the composition is skewed to basic residues. The disordered stretch occupies residues 67–87 (RGAKGHHHPHPPTSGAGAAGG). Residues cysteine 125, cysteine 180, cysteine 192, and histidine 197 each contribute to the Zn(2+) site. The short motif at 208 to 211 (PPPY) is the PY-motif element. The tract at residues 208-217 (PPPYSRYPMD) is important for interaction with SMURF2. Serine 249 carries the post-translational modification Phosphoserine. Residues 261–426 (WCVVAYWEEK…CWLEVIFNSR (166 aa)) enclose the MH2 domain.

Belongs to the dwarfin/SMAD family. As to quaternary structure, interacts with COPS5. Interacts with STAMBP. Interacts with PPP1R15A. Interacts with NEDD4L. Interacts with RNF111, AXIN1 and AXIN2. Interacts with ACVR1B, SMURF1, SMURF2 and TGFBR1; SMAD7 recruits SMURF1 and SMURF2 to the TGF-beta receptor and regulates its degradation. Interacts with WWP1. Interacts with PDPK1 (via PH domain). Ubiquitinated by WWP1. Interacts with TSC22D1/TSC-22; the interaction requires TGF-beta and the interaction is inhibited by TGFBR1. In terms of processing, phosphorylation on Ser-249 does not affect its stability, nuclear localization or inhibitory function in TGFB signaling; however it affects its ability to regulate transcription. Phosphorylated by PDPK1. Ubiquitinated by WWP1. Polyubiquitinated by RNF111, which is enhanced by AXIN1 and promotes proteasomal degradation. In response to TGF-beta, ubiquitinated by SMURF1; which promotes its degradation. Ubiquitinated by ARK2C, promoting proteasomal degradation, leading to enhance the BMP-Smad signaling. Post-translationally, acetylation prevents ubiquitination and degradation mediated by SMURF1. In terms of tissue distribution, ubiquitous in various organs, with higher levels in brain and kidney.

The protein localises to the nucleus. The protein resides in the cytoplasm. In terms of biological role, antagonist of signaling by TGF-beta (transforming growth factor) type 1 receptor superfamily members; has been shown to inhibit TGF-beta (Transforming growth factor) and activin signaling by associating with their receptors thus preventing SMAD2 access. Functions as an adapter to recruit SMURF2 to the TGF-beta receptor complex. Also acts by recruiting the PPP1R15A-PP1 complex to TGFBR1, which promotes its dephosphorylation. Positively regulates PDPK1 kinase activity by stimulating its dissociation from the 14-3-3 protein YWHAQ which acts as a negative regulator. The chain is Mothers against decapentaplegic homolog 7 (Smad7) from Mus musculus (Mouse).